Here is a 283-residue protein sequence, read N- to C-terminus: Acetylglutamate kinase (283 aa).

Residues 63–64 (GG), Arg85, and Asn178 each bind substrate.

This sequence belongs to the acetylglutamate kinase family. ArgB subfamily.

The protein localises to the cytoplasm. It carries out the reaction N-acetyl-L-glutamate + ATP = N-acetyl-L-glutamyl 5-phosphate + ADP. The protein operates within amino-acid biosynthesis; L-arginine biosynthesis; N(2)-acetyl-L-ornithine from L-glutamate: step 2/4. Functionally, catalyzes the ATP-dependent phosphorylation of N-acetyl-L-glutamate. The sequence is that of Acetylglutamate kinase from Prochlorococcus marinus (strain MIT 9301).